We begin with the raw amino-acid sequence, 208 residues long: Small ribosomal subunit protein uS4 (208 aa).

Residues 98–161 (RRLDNVIYRM…KELEIIKESL (64 aa)) enclose the S4 RNA-binding domain.

This sequence belongs to the universal ribosomal protein uS4 family. Part of the 30S ribosomal subunit. Contacts protein S5. The interaction surface between S4 and S5 is involved in control of translational fidelity.

Functionally, one of the primary rRNA binding proteins, it binds directly to 16S rRNA where it nucleates assembly of the body of the 30S subunit. Its function is as follows. With S5 and S12 plays an important role in translational accuracy. The protein is Small ribosomal subunit protein uS4 of Thermodesulfovibrio yellowstonii (strain ATCC 51303 / DSM 11347 / YP87).